A 361-amino-acid polypeptide reads, in one-letter code: Peptide chain release factor 1 (361 aa).

Glutamine 237 carries the post-translational modification N5-methylglutamine. Residues 286-296 (EKRRSAEESTR) are compositionally biased toward basic and acidic residues. Residues 286-305 (EKRRSAEESTRRNLVSSGDR) are disordered.

It belongs to the prokaryotic/mitochondrial release factor family. Methylated by PrmC. Methylation increases the termination efficiency of RF1.

It is found in the cytoplasm. Peptide chain release factor 1 directs the termination of translation in response to the peptide chain termination codons UAG and UAA. In Shewanella pealeana (strain ATCC 700345 / ANG-SQ1), this protein is Peptide chain release factor 1.